We begin with the raw amino-acid sequence, 408 residues long: Argininosuccinate synthase (408 aa).

Residues 12 to 20 (AYSGGLDTS) and Ala-39 each bind ATP. Positions 92 and 97 each coordinate L-citrulline. Gly-122 contacts ATP. Residues Thr-124, Asn-128, and Asp-129 each coordinate L-aspartate. Asn-128 is an L-citrulline binding site. The L-citrulline site is built by Arg-132, Ser-183, Ser-192, Glu-268, and Tyr-280.

This sequence belongs to the argininosuccinate synthase family. Type 1 subfamily. Homotetramer.

The protein resides in the cytoplasm. It catalyses the reaction L-citrulline + L-aspartate + ATP = 2-(N(omega)-L-arginino)succinate + AMP + diphosphate + H(+). It participates in amino-acid biosynthesis; L-arginine biosynthesis; L-arginine from L-ornithine and carbamoyl phosphate: step 2/3. This is Argininosuccinate synthase from Caulobacter vibrioides (strain ATCC 19089 / CIP 103742 / CB 15) (Caulobacter crescentus).